The following is a 559-amino-acid chain: Suppressor of tumorigenicity 7 protein-like (559 aa).

3 helical membrane-spanning segments follow: residues 39–59, 83–103, and 513–533; these read GLANSGSTLWFLAGLGLLYAL, FYVALTGTSSLISGLIFIFEW, and LPFFIHFTAGLCSSTAMLAFL.

Belongs to the ST7 family. Ubiquitously expressed.

The protein resides in the membrane. This is Suppressor of tumorigenicity 7 protein-like (St7l) from Mus musculus (Mouse).